Consider the following 650-residue polypeptide: Macrolide export ATP-binding/permease protein MacB (650 aa).

The region spanning 9–248 (IELIDLERVF…RPLGRPPGGA (240 aa)) is the ABC transporter domain. Residue 45–52 (GQSGSGKS) participates in ATP binding. The next 4 helical transmembrane spans lie at 276–296 (ALTLLGVVIGVAAVVTMMAIG), 525–545 (LTLLLGAVALISLLVGGIGVM), 580–600 (AVAVCGVGGLAGVGLGLGAAL), and 615–635 (PPIVAFCCAFLTGLLFGYLPA).

Belongs to the ABC transporter superfamily. Macrolide exporter (TC 3.A.1.122) family. As to quaternary structure, homodimer.

Its subcellular location is the cell inner membrane. Functionally, non-canonical ABC transporter that contains transmembrane domains (TMD), which form a pore in the inner membrane, and an ATP-binding domain (NBD), which is responsible for energy generation. Confers resistance against macrolides. The chain is Macrolide export ATP-binding/permease protein MacB from Rhodospirillum rubrum (strain ATCC 11170 / ATH 1.1.1 / DSM 467 / LMG 4362 / NCIMB 8255 / S1).